A 514-amino-acid chain; its full sequence is Peptide chain release factor 3 (514 aa).

The tr-type G domain occupies 8-268 (KKRRTFAIIS…IFLKFAPEPH (261 aa)). GTP contacts are provided by residues 17–24 (SHPDAGKT), 85–89 (DTPGH), and 139–142 (NKLD).

This sequence belongs to the TRAFAC class translation factor GTPase superfamily. Classic translation factor GTPase family. PrfC subfamily.

It is found in the cytoplasm. Increases the formation of ribosomal termination complexes and stimulates activities of RF-1 and RF-2. It binds guanine nucleotides and has strong preference for UGA stop codons. It may interact directly with the ribosome. The stimulation of RF-1 and RF-2 is significantly reduced by GTP and GDP, but not by GMP. In Streptococcus pneumoniae (strain CGSP14), this protein is Peptide chain release factor 3.